Here is a 171-residue protein sequence, read N- to C-terminus: Ribosome maturation factor RimM (171 aa).

The region spanning 98–170 (EGEFYLHQII…AVQVSVPEGL (73 aa)) is the PRC barrel domain.

The protein belongs to the RimM family. In terms of assembly, binds ribosomal protein uS19.

The protein localises to the cytoplasm. An accessory protein needed during the final step in the assembly of 30S ribosomal subunit, possibly for assembly of the head region. Essential for efficient processing of 16S rRNA. May be needed both before and after RbfA during the maturation of 16S rRNA. It has affinity for free ribosomal 30S subunits but not for 70S ribosomes. The chain is Ribosome maturation factor RimM from Pediococcus pentosaceus (strain ATCC 25745 / CCUG 21536 / LMG 10740 / 183-1w).